Here is a 374-residue protein sequence, read N- to C-terminus: MNALFIIIFMIVVGAIIGGITNVIAIRMLFHPFKPYYIFKFRVPFTPGLIPKRREEIATKIGQVIEEHLLTETLINEKLKSEQSQQAIESMIQQQLQKLTKDQLSIKQITSQIDIDLEQVLQTNGNQYIESQLNNYYTKHQNQTIASLLPNQLVTFLNQHVDNATDLLCDRARNYLSSAKGTQDINDMLDTFFNEKGKLIGMLQMFMTKESIADRIQQELIRLTSHPKARTIVTSLITNEYQTFKDKPLNELLDASQFNEIAENLSVYVTTYASKQANKPVVTLMPQFVDYLEGQLSSKLANLIIEKLSIHLSTIMKKVDLRGLIEEQINTFDLDYIEKLIIEIANKELKLIMSLGFILGGIIGFFQGLVAIFV.

Transmembrane regions (helical) follow at residues 4-24 and 354-374; these read LFII…TNVI and SLGF…AIFV.

This sequence belongs to the UPF0754 family.

It is found in the cell membrane. This Staphylococcus aureus (strain Newman) protein is UPF0754 membrane protein NWMN_1738.